The primary structure comprises 306 residues: tRNA dimethylallyltransferase (306 aa).

11 to 18 (GPTAVGKS) contributes to the ATP binding site. Residue 13-18 (TAVGKS) coordinates substrate. Residues 35-38 (DSIQ) form an interaction with substrate tRNA region.

It belongs to the IPP transferase family. In terms of assembly, monomer. Mg(2+) serves as cofactor.

It catalyses the reaction adenosine(37) in tRNA + dimethylallyl diphosphate = N(6)-dimethylallyladenosine(37) in tRNA + diphosphate. Catalyzes the transfer of a dimethylallyl group onto the adenine at position 37 in tRNAs that read codons beginning with uridine, leading to the formation of N6-(dimethylallyl)adenosine (i(6)A). The polypeptide is tRNA dimethylallyltransferase (Borreliella burgdorferi (strain ATCC 35210 / DSM 4680 / CIP 102532 / B31) (Borrelia burgdorferi)).